Here is a 122-residue protein sequence, read N- to C-terminus: MIQMQSILEVADNSGAKKVMCIKVLGGSHHMVAKLGDVIVVSVKDAIPGGKVKKGDVYKGVIVRTKTGVVRPDGSTIKFDQNALVLLNKQDEPIGTRVFGPVTRELRAKKYVRIMSLAEEVL.

This sequence belongs to the universal ribosomal protein uL14 family. In terms of assembly, part of the 50S ribosomal subunit. Forms a cluster with proteins L3 and L19. In the 70S ribosome, L14 and L19 interact and together make contacts with the 16S rRNA in bridges B5 and B8.

Binds to 23S rRNA. Forms part of two intersubunit bridges in the 70S ribosome. This chain is Large ribosomal subunit protein uL14, found in Rickettsia africae (strain ESF-5).